Consider the following 390-residue polypeptide: 4-O-beta-D-mannosyl-D-glucose phosphorylase (390 aa).

It belongs to the glycosyl hydrolase 130 family.

It carries out the reaction 4-O-beta-D-mannopyranosyl-D-glucopyranose + phosphate = alpha-D-mannose 1-phosphate + D-glucose. In terms of biological role, converts 4-O-beta-D-mannopyranosyl-D-glucopyranose (Man-Glc) to mannose 1-phosphate (Man1P) and glucose. Involved in a mannan catabolic pathway which feeds into glycolysis. The chain is 4-O-beta-D-mannosyl-D-glucose phosphorylase from Bacteroides fragilis (strain ATCC 25285 / DSM 2151 / CCUG 4856 / JCM 11019 / LMG 10263 / NCTC 9343 / Onslow / VPI 2553 / EN-2).